The primary structure comprises 235 residues: Sugar fermentation stimulation protein homolog (235 aa).

The protein belongs to the SfsA family.

This Aliivibrio fischeri (strain MJ11) (Vibrio fischeri) protein is Sugar fermentation stimulation protein homolog.